We begin with the raw amino-acid sequence, 202 residues long: Imidazoleglycerol-phosphate dehydratase (202 aa).

Belongs to the imidazoleglycerol-phosphate dehydratase family.

It is found in the cytoplasm. It catalyses the reaction D-erythro-1-(imidazol-4-yl)glycerol 3-phosphate = 3-(imidazol-4-yl)-2-oxopropyl phosphate + H2O. The protein operates within amino-acid biosynthesis; L-histidine biosynthesis; L-histidine from 5-phospho-alpha-D-ribose 1-diphosphate: step 6/9. The polypeptide is Imidazoleglycerol-phosphate dehydratase (Brucella abortus (strain S19)).